A 104-amino-acid polypeptide reads, in one-letter code: Holotricin-3 (104 aa).

A signal peptide spans 1–20 (MNKLIILGLACIIAVASAMP). The interval 22–104 (GPGDGHGGGH…HHGGYQTHGY (83 aa)) is disordered. The segment covering 23–97 (PGDGHGGGHG…PGGHGGGHHG (75 aa)) has biased composition (gly residues). 18 consecutive repeat copies span residues 27-30 (HGGG), 31-34 (HGGG), 35-38 (HGGG), 39-42 (HGNG), 43-46 (QGGG), 47-50 (HGHG), 51-54 (PGGG), 55-58 (FGGG), 59-62 (HGGG), 63-66 (HGGG), 67-70 (GRGG), 71-74 (GGSG), 75-78 (GGGS), 79-82 (PGHG), 83-86 (AGGG), 87-90 (YPGG), 91-94 (HGGG), and 96-98 (HGG). Positions 27–98 (HGGGHGGGHG…GGHGGGHHGG (72 aa)) are 18 X 4 AA approximate tandem repeats of H-G-G-G.

To T.molitor tenecin 3.

It is found in the secreted. Functionally, has antifungal activity against C.albicans. The polypeptide is Holotricin-3 (Holotrichia diomphalia (Korean black chafer)).